Here is a 734-residue protein sequence, read N- to C-terminus: Photosystem I P700 chlorophyll a apoprotein A2 (734 aa).

A run of 8 helical transmembrane segments spans residues 46–69, 135–158, 175–199, 273–291, 330–353, 369–395, 417–439, and 517–535; these read IFAS…FHVA, LYTG…LHLQ, LNHH…HVAI, IAHH…GHMY, IHFQ…QHMY, AALY…IFFI, AIIS…LYVH, and FLVH…LILV. Residues cysteine 559 and cysteine 568 each coordinate [4Fe-4S] cluster. 2 helical membrane-spanning segments follow: residues 575–596 and 643–665; these read AFYL…YWHW and LSVW…MFLI. Residues histidine 654, methionine 662, and tyrosine 670 each coordinate chlorophyll a. Tryptophan 671 contacts phylloquinone. A helical transmembrane segment spans residues 707-727; sequence LVGLAHFSVGYIFTYAAFLIA.

This sequence belongs to the PsaA/PsaB family. The PsaA/B heterodimer binds the P700 chlorophyll special pair and subsequent electron acceptors. PSI consists of a core antenna complex that captures photons, and an electron transfer chain that converts photonic excitation into a charge separation. The eukaryotic PSI reaction center is composed of at least 11 subunits. P700 is a chlorophyll a/chlorophyll a' dimer, A0 is one or more chlorophyll a, A1 is one or both phylloquinones and FX is a shared 4Fe-4S iron-sulfur center. serves as cofactor.

The protein resides in the plastid. It is found in the chloroplast thylakoid membrane. It catalyses the reaction reduced [plastocyanin] + hnu + oxidized [2Fe-2S]-[ferredoxin] = oxidized [plastocyanin] + reduced [2Fe-2S]-[ferredoxin]. Its function is as follows. PsaA and PsaB bind P700, the primary electron donor of photosystem I (PSI), as well as the electron acceptors A0, A1 and FX. PSI is a plastocyanin-ferredoxin oxidoreductase, converting photonic excitation into a charge separation, which transfers an electron from the donor P700 chlorophyll pair to the spectroscopically characterized acceptors A0, A1, FX, FA and FB in turn. Oxidized P700 is reduced on the lumenal side of the thylakoid membrane by plastocyanin. The protein is Photosystem I P700 chlorophyll a apoprotein A2 of Vitis vinifera (Grape).